The following is a 661-amino-acid chain: tRNA uridine 5-carboxymethylaminomethyl modification enzyme MnmG (661 aa).

FAD contacts are provided by residues 16–21 (GAGHAG), V128, and S183. A disordered region spans residues 206–230 (PRVNGNTIDYSKTEEEPGDKTPRHF). Basic and acidic residues predominate over residues 216–230 (SKTEEEPGDKTPRHF). Residue 277–291 (GPRYCPSIEDKVVRF) coordinates NAD(+). Q374 is an FAD binding site.

Belongs to the MnmG family. In terms of assembly, homodimer. Heterotetramer of two MnmE and two MnmG subunits. It depends on FAD as a cofactor.

Its subcellular location is the cytoplasm. In terms of biological role, NAD-binding protein involved in the addition of a carboxymethylaminomethyl (cmnm) group at the wobble position (U34) of certain tRNAs, forming tRNA-cmnm(5)s(2)U34. This is tRNA uridine 5-carboxymethylaminomethyl modification enzyme MnmG from Lactobacillus helveticus (strain DPC 4571).